Reading from the N-terminus, the 342-residue chain is Phosphate acyltransferase (342 aa).

The protein belongs to the PlsX family. As to quaternary structure, homodimer. Probably interacts with PlsY.

The protein localises to the cytoplasm. The catalysed reaction is a fatty acyl-[ACP] + phosphate = an acyl phosphate + holo-[ACP]. It participates in lipid metabolism; phospholipid metabolism. Its function is as follows. Catalyzes the reversible formation of acyl-phosphate (acyl-PO(4)) from acyl-[acyl-carrier-protein] (acyl-ACP). This enzyme utilizes acyl-ACP as fatty acyl donor, but not acyl-CoA. In Legionella pneumophila (strain Paris), this protein is Phosphate acyltransferase.